Reading from the N-terminus, the 300-residue chain is Pleckstrin homology domain-containing family A member 3 (300 aa).

In terms of domain architecture, PH spans 1–93 (MEGVLYKWTN…WLVALGSSKA (93 aa)). Residues 1 to 100 (MEGVLYKWTN…SKACLTDTRT (100 aa)) are interaction with SACM1L. The interval 97-300 (DTRTKKEKEI…SEDTLPSFSS (204 aa)) is interaction with VAPA and VAPB. Residues 197 to 300 (PVSPSPVQMM…SEDTLPSFSS (104 aa)) are disordered. A phosphoserine mark is found at S236 and S244. Over residues 279 to 290 (EESRLMAKKQSE) the composition is skewed to basic and acidic residues.

In terms of assembly, interacts with GTP-bound ARF1. Interacts with SACM1L and VAPA and/or VAPB to form a ternary complex. In terms of tissue distribution, widely expressed.

It is found in the golgi apparatus. The protein localises to the trans-Golgi network membrane. In terms of biological role, plays a role in regulation of vesicular cargo transport from the trans-Golgi network (TGN) to the plasma membrane. Regulates Golgi phosphatidylinositol 4-phosphate (PtdIns(4)P) levels and activates the PtdIns(4)P phosphatase activity of SACM1L when it binds PtdIns(4)P in 'trans' configuration. Binds preferentially to PtdIns(4)P. Negatively regulates APOB secretion from hepatocytes. The protein is Pleckstrin homology domain-containing family A member 3 (PLEKHA3) of Homo sapiens (Human).